A 311-amino-acid chain; its full sequence is Probable cobalamin biosynthesis protein CobD (311 aa).

Helical transmembrane passes span 53 to 73, 76 to 96, 157 to 177, and 288 to 308; these read FIFGTLTTISVLFIVFGAIYG, ILINNIQNIYIKYIVYSFLIS, DSIIAPLFYAIFFGLEGAFIY, and FSIDVVIFSFIVLYSIYYVIF.

This sequence belongs to the CobD/CbiB family.

The protein resides in the cell membrane. It participates in cofactor biosynthesis; adenosylcobalamin biosynthesis. Functionally, converts cobyric acid to cobinamide by the addition of aminopropanol on the F carboxylic group. This Methanococcus aeolicus (strain ATCC BAA-1280 / DSM 17508 / OCM 812 / Nankai-3) protein is Probable cobalamin biosynthesis protein CobD.